The primary structure comprises 89 residues: Small ribosomal subunit protein uS15 (89 aa).

Positions 1–21 (MSITTEEKARVMKEYGTKDGD) are enriched in basic and acidic residues. Residues 1–24 (MSITTEEKARVMKEYGTKDGDTGS) form a disordered region.

It belongs to the universal ribosomal protein uS15 family. Part of the 30S ribosomal subunit. Forms a bridge to the 50S subunit in the 70S ribosome, contacting the 23S rRNA.

Its function is as follows. One of the primary rRNA binding proteins, it binds directly to 16S rRNA where it helps nucleate assembly of the platform of the 30S subunit by binding and bridging several RNA helices of the 16S rRNA. Functionally, forms an intersubunit bridge (bridge B4) with the 23S rRNA of the 50S subunit in the ribosome. This is Small ribosomal subunit protein uS15 from Ruegeria pomeroyi (strain ATCC 700808 / DSM 15171 / DSS-3) (Silicibacter pomeroyi).